Reading from the N-terminus, the 334-residue chain is Fructose-1,6-bisphosphatase class 1 (334 aa).

Mg(2+) is bound by residues Glu-93, Asp-117, Leu-119, and Asp-120. Substrate is bound by residues Asp-120–Ser-123, Asn-213, Tyr-244, and Lys-274. Position 280 (Glu-280) interacts with Mg(2+).

It belongs to the FBPase class 1 family. In terms of assembly, homotetramer. It depends on Mg(2+) as a cofactor.

The protein localises to the cytoplasm. It carries out the reaction beta-D-fructose 1,6-bisphosphate + H2O = beta-D-fructose 6-phosphate + phosphate. Its pathway is carbohydrate biosynthesis; gluconeogenesis. The polypeptide is Fructose-1,6-bisphosphatase class 1 (Flavobacterium johnsoniae (strain ATCC 17061 / DSM 2064 / JCM 8514 / BCRC 14874 / CCUG 350202 / NBRC 14942 / NCIMB 11054 / UW101) (Cytophaga johnsonae)).